We begin with the raw amino-acid sequence, 276 residues long: Octanoyltransferase LipM (276 aa).

The BPL/LPL catalytic domain occupies 32 to 247 (GEVAPTLRFY…GFEDALQLTF (216 aa)). Catalysis depends on Cys-149, which acts as the Acyl-thioester intermediate.

It belongs to the octanoyltransferase LipM family. As to quaternary structure, monomer.

The enzyme catalyses octanoyl-[ACP] + L-lysyl-[protein] = N(6)-octanoyl-L-lysyl-[protein] + holo-[ACP] + H(+). It participates in protein modification; protein lipoylation via endogenous pathway; protein N(6)-(lipoyl)lysine from octanoyl-[acyl-carrier-protein]. Catalyzes the transfer of endogenously produced octanoic acid from octanoyl-acyl-carrier-protein onto the lipoyl domain of GcvH, an intermediate carrier during protein lipoylation. The chain is Octanoyltransferase LipM from Exiguobacterium sibiricum (strain DSM 17290 / CCUG 55495 / CIP 109462 / JCM 13490 / 255-15).